A 575-amino-acid chain; its full sequence is Interleukin-10 receptor subunit alpha (575 aa).

Positions 1-16 (MLSRLLPFLVTISSLS) are cleaved as a signal peptide. Residues 17 to 241 (LEFIAYGTEL…QYFTVTNLSI (225 aa)) lie on the Extracellular side of the membrane. N-linked (GlcNAc...) asparagine glycans are attached at residues Asn-50, Asn-66, Asn-113, and Asn-182. An intrachain disulfide couples Cys-204 to Cys-225. Residue Asn-238 is glycosylated (N-linked (GlcNAc...) asparagine). Residues 242–262 (LVISMLLFCGILVCLVLQWYI) traverse the membrane as a helical segment. The Cytoplasmic portion of the chain corresponds to 263–575 (RHPGKLPTVL…PLISSLQVEE (313 aa)). Residues Tyr-443 and Tyr-493 each carry the phosphotyrosine modification.

It belongs to the type II cytokine receptor family. As to quaternary structure, interacts with IL10. Interacts with IL10RB. Interacts (via its cytoplasmic domain) with JAK1 (via N-terminus). Interacts with BTRC; this interaction leads to IL10RA ubiquitination and subsequent degradation. Interacts with STAT3. Post-translationally, phosphorylated. Phosphorylation of the cytoplasmic tail induced STAT3 activation. Ubiquitinated by BTRC; ubiquitination leads to endocytosis and subsequent degradation of IL10RA.

The protein localises to the cell membrane. Its subcellular location is the cytoplasm. Cell surface receptor for the cytokine IL10 that participates in IL10-mediated anti-inflammatory functions, limiting excessive tissue disruption caused by inflammation. Upon binding to IL10, induces a conformational change in IL10RB, allowing IL10RB to bind IL10 as well. In turn, the heterotetrameric assembly complex, composed of two subunits of IL10RA and IL10RB, activates the kinases JAK1 and TYK2 that are constitutively associated with IL10RA and IL10RB respectively. These kinases then phosphorylate specific tyrosine residues in the intracellular domain in IL10RA leading to the recruitment and subsequent phosphorylation of STAT3. Once phosphorylated, STAT3 homodimerizes, translocates to the nucleus and activates the expression of anti-inflammatory genes. In addition, IL10RA-mediated activation of STAT3 inhibits starvation-induced autophagy. The sequence is that of Interleukin-10 receptor subunit alpha (Il10ra) from Mus musculus (Mouse).